A 264-amino-acid chain; its full sequence is Proteasome assembly chaperone 2 (264 aa).

A Phosphothreonine modification is found at Thr137.

Belongs to the PSMG2 family. As to quaternary structure, forms a heterodimer with PSMG1. The PSMG1-PSMG2 heterodimer interacts directly with the PSMA5 and PSMA7 proteasome alpha subunits. Post-translationally, degraded by the proteasome upon completion of 20S proteasome maturation.

Its subcellular location is the nucleus. In terms of biological role, chaperone protein which promotes assembly of the 20S proteasome as part of a heterodimer with PSMG1. The PSMG1-PSMG2 heterodimer binds to the PSMA5 and PSMA7 proteasome subunits, promotes assembly of the proteasome alpha subunits into the heteroheptameric alpha ring and prevents alpha ring dimerization. This is Proteasome assembly chaperone 2 from Mus musculus (Mouse).